A 92-amino-acid polypeptide reads, in one-letter code: Transcription factor ILI6 (92 aa).

Positions 1–20 (MSSRRSRSRQSGSSRITDEQ) are disordered. The region spanning 5–59 (RSRSRQSGSSRITDEQISDLVSKLQDLLPEARLRSNDRVPSSRVLQETCNYIRSL) is the bHLH domain.

This sequence belongs to the bHLH protein family. As to quaternary structure, interacts with APG.

The protein resides in the nucleus. In terms of biological role, atypical and probable non DNA-binding bHLH transcription factor that acts as a positive regulator of grain size. Binds the transcription repressor APG and forms a heterodimer of antagonistic bHLH transcription factors that regulates grain length and weight by controlling cell elongation in lemma and palea. May be involved in the control of lamina inclination through brassinosteroid signaling pathway. This is Transcription factor ILI6 (ILI6) from Oryza sativa subsp. indica (Rice).